Here is a 334-residue protein sequence, read N- to C-terminus: Ketol-acid reductoisomerase (NADP(+)) (334 aa).

The 181-residue stretch at 2 to 182 folds into the KARI N-terminal Rossmann domain; it reads PKMYYEKDTD…GGARAGVLET (181 aa). NADP(+) contacts are provided by residues 25–28, Ser-51, Ser-53, and 83–86; these read YGSQ and DEKQ. The active site involves His-108. Gly-134 contacts NADP(+). Positions 183–328 constitute a KARI C-terminal knotted domain; that stretch reads TFKDETETDL…KELRGMMSWI (146 aa). Mg(2+) contacts are provided by Asp-191, Glu-195, Glu-227, and Glu-231. Residue Ser-252 coordinates substrate.

Belongs to the ketol-acid reductoisomerase family. Mg(2+) serves as cofactor.

The enzyme catalyses (2R)-2,3-dihydroxy-3-methylbutanoate + NADP(+) = (2S)-2-acetolactate + NADPH + H(+). It catalyses the reaction (2R,3R)-2,3-dihydroxy-3-methylpentanoate + NADP(+) = (S)-2-ethyl-2-hydroxy-3-oxobutanoate + NADPH + H(+). The protein operates within amino-acid biosynthesis; L-isoleucine biosynthesis; L-isoleucine from 2-oxobutanoate: step 2/4. Its pathway is amino-acid biosynthesis; L-valine biosynthesis; L-valine from pyruvate: step 2/4. Functionally, involved in the biosynthesis of branched-chain amino acids (BCAA). Catalyzes an alkyl-migration followed by a ketol-acid reduction of (S)-2-acetolactate (S2AL) to yield (R)-2,3-dihydroxy-isovalerate. In the isomerase reaction, S2AL is rearranged via a Mg-dependent methyl migration to produce 3-hydroxy-3-methyl-2-ketobutyrate (HMKB). In the reductase reaction, this 2-ketoacid undergoes a metal-dependent reduction by NADPH to yield (R)-2,3-dihydroxy-isovalerate. This Clostridium beijerinckii (strain ATCC 51743 / NCIMB 8052) (Clostridium acetobutylicum) protein is Ketol-acid reductoisomerase (NADP(+)).